Reading from the N-terminus, the 210-residue chain is Na(+)-translocating NADH-quinone reductase subunit D (210 aa).

6 consecutive transmembrane segments (helical) span residues 14–34 (PIVN…ALAV), 42–62 (LVMA…ISMI), 72–92 (IIVQ…LLQA), 103–123 (VFVG…AYAM), 131–151 (FMDG…VGFV), and 178–198 (NGLL…IWII).

This sequence belongs to the NqrDE/RnfAE family. As to quaternary structure, composed of six subunits; NqrA, NqrB, NqrC, NqrD, NqrE and NqrF.

The protein resides in the cell inner membrane. It catalyses the reaction a ubiquinone + n Na(+)(in) + NADH + H(+) = a ubiquinol + n Na(+)(out) + NAD(+). Its function is as follows. NQR complex catalyzes the reduction of ubiquinone-1 to ubiquinol by two successive reactions, coupled with the transport of Na(+) ions from the cytoplasm to the periplasm. NqrA to NqrE are probably involved in the second step, the conversion of ubisemiquinone to ubiquinol. This chain is Na(+)-translocating NADH-quinone reductase subunit D, found in Shewanella baltica (strain OS223).